We begin with the raw amino-acid sequence, 179 residues long: X-linked lymphocyte-regulated protein 5C (179 aa).

Over residues 1 to 11 the composition is skewed to basic and acidic residues; sequence MSNKEQKDMKK. Positions 1-75 are disordered; the sequence is MSNKEQKDMK…MQDFKGDDGT (75 aa). Residues 42–53 are compositionally biased toward low complexity; sequence GTSGMGSHSSGS. The segment covering 56-75 has biased composition (basic and acidic residues); it reads QEAREPVQKKMQDFKGDDGT. A coiled-coil region spans residues 146–175; the sequence is ITQQQMKILQTAIEDHETKLKNAKDMCDTF.

The protein belongs to the XLR/SYCP3 family. In terms of tissue distribution, expressed in testis (at protein level). Also expressed in ovary. Not detected in other tissues tested.

It is found in the nucleus. The protein resides in the chromosome. The chain is X-linked lymphocyte-regulated protein 5C from Mus musculus (Mouse).